Consider the following 876-residue polypeptide: Alanine--tRNA ligase (876 aa).

An N6-acetyllysine modification is found at lysine 74. Histidine 564, histidine 568, cysteine 666, and histidine 670 together coordinate Zn(2+).

The protein belongs to the class-II aminoacyl-tRNA synthetase family. Homotetramer. It depends on Zn(2+) as a cofactor.

Its subcellular location is the cytoplasm. The enzyme catalyses tRNA(Ala) + L-alanine + ATP = L-alanyl-tRNA(Ala) + AMP + diphosphate. Functionally, catalyzes the attachment of alanine to tRNA(Ala) in a two-step reaction: alanine is first activated by ATP to form Ala-AMP and then transferred to the acceptor end of tRNA(Ala). Also edits incorrectly charged Ser-tRNA(Ala) and Gly-tRNA(Ala) via its editing domain. This chain is Alanine--tRNA ligase, found in Shigella boydii serotype 4 (strain Sb227).